The chain runs to 258 residues: Ribosomal RNA small subunit methyltransferase A (258 aa).

Residues His13, Leu15, Gly40, Glu61, Asp86, and Asn106 each contribute to the S-adenosyl-L-methionine site.

It belongs to the class I-like SAM-binding methyltransferase superfamily. rRNA adenine N(6)-methyltransferase family. RsmA subfamily.

It is found in the cytoplasm. The catalysed reaction is adenosine(1518)/adenosine(1519) in 16S rRNA + 4 S-adenosyl-L-methionine = N(6)-dimethyladenosine(1518)/N(6)-dimethyladenosine(1519) in 16S rRNA + 4 S-adenosyl-L-homocysteine + 4 H(+). Functionally, specifically dimethylates two adjacent adenosines (A1518 and A1519) in the loop of a conserved hairpin near the 3'-end of 16S rRNA in the 30S particle. May play a critical role in biogenesis of 30S subunits. This chain is Ribosomal RNA small subunit methyltransferase A, found in Coxiella burnetii (strain RSA 331 / Henzerling II).